The following is a 237-amino-acid chain: DNA repair protein RecO (237 aa).

It belongs to the RecO family.

In terms of biological role, involved in DNA repair and RecF pathway recombination. The sequence is that of DNA repair protein RecO from Rickettsia rickettsii (strain Iowa).